The sequence spans 565 residues: MVEKQFNIDLELNDTGHIDPFLQDEDKLKLEELIPRILFERKSFLNVTEDSLRKEIDNSLKISEEDALDTEESREDTVEADQQEVFNKHKFELSKNINNALNETQLSLDFVSLLISSVKPSLAKSTISPHLSKFVKPTSLNSDRLGQDSNDNQESKATDSFGQGWKLESLGKITDLFREASTNLNDQVIKERRYWNMINLVLANDEVLFRMRDPQNNARAIGVKYGYGDSGSNFHDQGLALLRKDNQTGEISFHPISSINNAKIVEKVSRFIRVKILSQIDGDYMLTGQSIFNFDFEKSKQSIINDIEKARFFLFEEDLFHQLIREAKLLVNYNVSIISNKIIIEINNIIIEIESIVYDELNEEELENYYQNVNEYSTLHNKKCQLILNYLKLMLCCYYKYNLKLKQKVPTALTKWKQSNSHPLILRPLVGNMRHELNLLNMKSVLDRLMHAHESELSYSKLDVEKFINLATRSKKQNPFQKSIEKPISKFHLVLCNKTSNMLDVNIQLTTNESFVNLIINMTIIRFETEDDFKNNVNGINVLQLGFSDFNEIEECLDWSIQNFV.

Over residues 138–152 (TSLNSDRLGQDSNDN) the composition is skewed to polar residues. The segment at 138 to 160 (TSLNSDRLGQDSNDNQESKATDS) is disordered.

This sequence belongs to the Mediator complex subunit 17 family. As to quaternary structure, component of the Mediator complex.

It localises to the nucleus. Component of the Mediator complex, a coactivator involved in the regulated transcription of nearly all RNA polymerase II-dependent genes. Mediator functions as a bridge to convey information from gene-specific regulatory proteins to the basal RNA polymerase II transcription machinery. Mediator is recruited to promoters by direct interactions with regulatory proteins and serves as a scaffold for the assembly of a functional preinitiation complex with RNA polymerase II and the general transcription factors. The protein is Mediator of RNA polymerase II transcription subunit 17 (SRB4) of Candida albicans (strain SC5314 / ATCC MYA-2876) (Yeast).